The chain runs to 239 residues: Adapter protein MecA (239 aa).

Over residues 118 to 128 (EQRTKEKEAQG) the composition is skewed to basic and acidic residues. The segment at 118 to 137 (EQRTKEKEAQGSKRQKSSAR) is disordered.

Belongs to the MecA family. Homodimer.

Functionally, enables the recognition and targeting of unfolded and aggregated proteins to the ClpC protease or to other proteins involved in proteolysis. This Staphylococcus aureus (strain USA300) protein is Adapter protein MecA.